The following is a 123-amino-acid chain: Small ribosomal subunit protein uS12 (123 aa).

A disordered region spans residues 1–30; it reads MPTIQQLVRKGRQDKVEKNKTPALEGSPQR. Basic and acidic residues predominate over residues 11-20; that stretch reads GRQDKVEKNK. At Asp-89 the chain carries 3-methylthioaspartic acid.

It belongs to the universal ribosomal protein uS12 family. As to quaternary structure, part of the 30S ribosomal subunit. Contacts proteins S8 and S17. May interact with IF1 in the 30S initiation complex.

Functionally, with S4 and S5 plays an important role in translational accuracy. Interacts with and stabilizes bases of the 16S rRNA that are involved in tRNA selection in the A site and with the mRNA backbone. Located at the interface of the 30S and 50S subunits, it traverses the body of the 30S subunit contacting proteins on the other side and probably holding the rRNA structure together. The combined cluster of proteins S8, S12 and S17 appears to hold together the shoulder and platform of the 30S subunit. The polypeptide is Small ribosomal subunit protein uS12 (rpsL) (Streptomyces avermitilis (strain ATCC 31267 / DSM 46492 / JCM 5070 / NBRC 14893 / NCIMB 12804 / NRRL 8165 / MA-4680)).